A 920-amino-acid polypeptide reads, in one-letter code: 3-hydroxy-3-methylglutaryl-coenzyme A reductase (920 aa).

The helical transmembrane segment at 12-32 (FCASHPWEVIVALLTITACML) threads the bilayer. An N-linked (GlcNAc...) asparagine glycan is attached at asparagine 37. The segment at 62–85 (GAGSGASGTIPPSSMGGSATSSRH) is disordered. A compositionally biased stretch (polar residues) spans 71-82 (IPPSSMGGSATS). In terms of domain architecture, SSD spans 106 to 263 (DVILMTIVRC…MTFYPACLSL (158 aa)). Helical transmembrane passes span 107-129 (VILM…CSLH), 136-156 (VLGI…TAII), 170-190 (LFFL…QLAL), 208-228 (LLGP…GVGT), and 237-257 (VLCM…MTFY). Asparagine 342 and asparagine 346 each carry an N-linked (GlcNAc...) asparagine glycan. Residues 364–384 (SADHIVISIVLIALVVKFICF) form a helical membrane-spanning segment. Residues 385–498 (DNRDPLPDQL…EEIVSIVHAG (114 aa)) form a linker region. N-linked (GlcNAc...) asparagine glycans are attached at residues asparagine 443 and asparagine 475. Positions 499-829 (GTHCPLHKIE…TCTMPSLEVG (331 aa)) are catalytic. Catalysis depends on charge relay system residues glutamate 586, lysine 717, and aspartate 793. N-linked (GlcNAc...) asparagine glycans are attached at residues asparagine 797 and asparagine 802. The active-site Proton donor is the histidine 892. Asparagine 896 and asparagine 910 each carry an N-linked (GlcNAc...) asparagine glycan.

It belongs to the HMG-CoA reductase family. As to expression, highly expressed in embryonic gonadal mesoderm, where expression is initially broad, and then becomes restricted to a segmental pattern at stage 11. Expression is then further restricted to a cluster of cells in each of parasegments 10, 11 and 12, corresponding to the developing gonadal mesoderm. Not expressed in pole cells.

The protein localises to the endoplasmic reticulum membrane. The catalysed reaction is (R)-mevalonate + 2 NADP(+) + CoA = (3S)-3-hydroxy-3-methylglutaryl-CoA + 2 NADPH + 2 H(+). The protein operates within metabolic intermediate biosynthesis; (R)-mevalonate biosynthesis; (R)-mevalonate from acetyl-CoA: step 3/3. With respect to regulation, the activity of HMG-CoA-reductase is suppressed by exogenous mevalonate. In terms of biological role, synthesis of mevalonate for the production of non-sterol isoprenoids, which are essential for growth differentiation. Provides spatial information during embryogenesis to guide migrating primordial germ cells (the pole cells) from the ectoderm to the mesoderm. Also required for association of the pole cells with the gonadal mesoderm. The chain is 3-hydroxy-3-methylglutaryl-coenzyme A reductase (Hmgcr) from Drosophila melanogaster (Fruit fly).